A 284-amino-acid polypeptide reads, in one-letter code: MDAIKKKMQAMKLEKDNAMDKADTCEQQARDANLRAEKVNEEVRELQKKLAQVEEDLILNKNKLEQANKDLEEKEKQLTATEAEVAALNRKVQQIEEDLEKSEERSGTAQQKLLEAQQSADENNRMCKVLENRAQQDEERMDQLTNQLKEARLLAEDADGKSDEVSRKLAFVEDELEVAEDRVKSGDAKISELEEELKVVGNSLKSLEVSEEKANQRVEEFKKQLKTLTGKLKEAEARAEYAEKTVKKLQKEVDRLEDELGINKDRYKSLADEMDSTFAELAGY.

2 disordered regions span residues 1–26 (MDAIKKKMQAMKLEKDNAMDKADTCE) and 96–124 (EEDLEKSEERSGTAQQKLLEAQQSADENN). Positions 1–276 (MDAIKKKMQA…YKSLADEMDS (276 aa)) form a coiled coil. Over residues 12–26 (KLEKDNAMDKADTCE) the composition is skewed to basic and acidic residues. The segment covering 107-121 (GTAQQKLLEAQQSAD) has biased composition (polar residues).

The protein belongs to the tropomyosin family. Homodimer.

Functionally, tropomyosin, in association with the troponin complex, plays a central role in the calcium dependent regulation of muscle contraction. The polypeptide is Tropomyosin-1 (Bombyx mori (Silk moth)).